A 1355-amino-acid chain; its full sequence is MLSFVDLRSVLLLAVTLYLVTCQEVRRGPRGDKGPPGEQGPPGIPGRDGEDGLPGLPGPPGVPGLGGNFAAQYDPSKSAEPGQQGIMGPRGPPGPPGSPGSQGFQGLPGENGEPGQTGPVGSRGPSGAPGKAGEDGHPGKSGRPGERGPVGPQGARGFPGTPGLPGFKGIRGHTGSDGQKGAPGAAGVKGENGANGDNGSPGQAGARGLPGERGRIGPAGSAGSRGSDGSSGPVGPAGPIGSAGAPGLPGAPGAKGELGPAGNNGPTGAAGGRGEPGPPGSLGPAGPPGNPGTNGVNGAKGTAGLPGVGGAPGLPGGRGIPGPAGPAGPSGARGLAGDPGIAGGKGDTGSKGEPGSVGQQGPAGPSGEEGKRGPNGEAGSSGPSGNAGIRGVPGTRGLPGPDGRAGGIGPAGSRGSSGPPGARGPNGDAGRPGEPGLLGARGLPGFSGSNGPQGKEGPAGPQGIEGRSGAAGPAGARGEPGAIGFPGPKGPNGEPGKNGDKGNQGPSGNRGAPGPDGNNGAQGPAGLGGATGEKGEQGPSGAPGFQGLPGPGGPPGEVGKPGERGAPGDFGPPGSAGTRGERGAPGESGGAGPHGPSGSRGPSGAPGPDGQKGEPGAAGLNGGLGPSGPAGIPGERGTAGTPGTKGEKGDAGNSGDYGNPGRDGARGPAGAAGAPGPAGGPGDRGESGPAGPSGVAGPRGAPGERGEAGPAGPTGFAGPPGAAGHTGAKGDRGAKGPKGEAGSPGPLGAHGSAGPAGPNGPAGSTGARGDAGPSGATGFPGPAGRAGAPGPPGNVGPSGPTGHPGKDGSRGPRGDSGPVGRPGEQGQHGPVGLAGDKGPSGEAGPAGPPGAAGPSGVLGARGILGLPGTRGERGLPGGPGSNGEPGPSGLAGSSGPRGPPGSVGSPGPVGHSGEAGRDGHPGNDGPPGRDGLPGAKGERGYPGNTGPSGLAGAPGPAGSAGPAGKSGNRGEGGPSGPAGITGPSGPRGPAGPQGVRGDKGEAGERGARGLDGRKGHNGLSGLPGPSGTPGETGPSGSVGPVGPRGPSGPSGPPGKEGRSGHPGAMGPVGPRGPAGFTGPAGPPGPPGPPGHAGPSGGGYDGGDGGEYYRADQPERKPKDYEVDATLKSLNQQIEVILTPEGSRKNPARTCRDLRLSHPEWTSGFYWIDPNQGCTSDAIRVFCDFSSGETCIHANPDEITQKNWYINTSNKDKKHLWFGEILNGGTQFEYHDEGLTAKDMATQLAFMRLLANQASQNITYHCKNSIAYMDEETGNLKKAVILQGSNDVELRAEGNTRFTYSVLEDGCTKHTGEWGKTVIEYRTNKPSRLPILDIAPLDIGGHDQEIGFEIGPVCFK.

Residues 1-22 (MLSFVDLRSVLLLAVTLYLVTC) form the signal peptide. At glutamine 23 the chain carries Pyrrolidone carboxylic acid. Residues 23–71 (QEVRRGPRGDKGPPGEQGPPGIPGRDGEDGLPGLPGPPGVPGLGGNFAA) constitute a propeptide, N-terminal propeptide. Over residues 26-35 (RRGPRGDKGP) the composition is skewed to basic and acidic residues. The segment at 26-1111 (RRGPRGDKGP…GDGGEYYRAD (1086 aa)) is disordered. Residue glutamine 72 is modified to Pyrrolidone carboxylic acid. Lysine 77 bears the Allysine mark. A compositionally biased stretch (low complexity) spans 99–108 (PGSQGFQGLP). Basic and acidic residues predominate over residues 132-146 (AGEDGHPGKSGRPGE). At lysine 168 the chain carries 5-hydroxylysine; alternate. Lysine 168 is a glycosylation site (O-linked (Gal...) hydroxylysine; alternate). Low complexity predominate over residues 218 to 267 (PAGSAGSRGSDGSSGPVGPAGPIGSAGAPGLPGAPGAKGELGPAGNNGPT). Residues 276–290 (PGPPGSLGPAGPPGN) show a composition bias toward pro residues. The segment covering 291–303 (PGTNGVNGAKGTA) has biased composition (low complexity). Positions 304–322 (GLPGVGGAPGLPGGRGIPG) are enriched in gly residues. Residues 327-336 (AGPSGARGLA) show a composition bias toward low complexity. Composition is skewed to gly residues over residues 340–349 (GIAGGKGDTG) and 403–412 (GRAGGIGPAG). Low complexity-rich tracts occupy residues 413–426 (SRGS…RGPN) and 465–495 (EGRS…NGEP). Composition is skewed to gly residues over residues 523–532 (GPAGLGGATG) and 586–595 (GESGGAGPHG). Low complexity predominate over residues 596–618 (PSGSRGPSGAPGPDGQKGEPGAA). Residues 619–628 (GLNGGLGPSG) are compositionally biased toward gly residues. Composition is skewed to low complexity over residues 659-675 (NPGR…AGAP), 687-701 (SGPA…PRGA), and 708-726 (AGPA…AGHT). The span at 728-738 (AKGDRGAKGPK) shows a compositional bias: basic and acidic residues. Composition is skewed to low complexity over residues 741-767 (AGSP…STGA) and 776-788 (ATGF…RAGA). The segment covering 804–813 (PGKDGSRGPR) has biased composition (basic and acidic residues). The segment covering 852-869 (AGPSGVLGARGILGLPGT) has biased composition (low complexity). Residues 874–883 (GLPGGPGSNG) show a composition bias toward gly residues. Low complexity-rich tracts occupy residues 884–912 (EPGP…VGHS) and 947–966 (PSGL…AGKS). Gly residues predominate over residues 967–976 (GNRGEGGPSG). The segment covering 996–1014 (RGDKGEAGERGARGLDGRK) has biased composition (basic and acidic residues). Residues 1019–1041 (LSGLPGPSGTPGETGPSGSVGPV) are compositionally biased toward low complexity. The segment covering 1080–1091 (AGPPGPPGPPGH) has biased composition (pro residues). A compositionally biased stretch (gly residues) spans 1093–1105 (GPSGGGYDGGDGG). Positions 1111–1355 (DQPERKPKDY…GFEIGPVCFK (245 aa)) are cleaved as a propeptide — C-terminal propeptide. One can recognise a Fibrillar collagen NC1 domain in the interval 1120 to 1355 (YEVDATLKSL…GFEIGPVCFK (236 aa)). 3 cysteine pairs are disulfide-bonded: cysteine 1150/cysteine 1182, cysteine 1190/cysteine 1353, and cysteine 1261/cysteine 1306. Positions 1168, 1170, 1171, 1173, and 1176 each coordinate Ca(2+). N-linked (GlcNAc...) asparagine glycosylation is found at asparagine 1206 and asparagine 1256.

Belongs to the fibrillar collagen family. In terms of assembly, trimers of one alpha 2(I) and two alpha 1(I) chains. In terms of processing, prolines at the third position of the tripeptide repeating unit (G-X-Y) are hydroxylated in some or all of the chains. As to expression, forms the fibrils of tendon, ligaments and bones. In bones the fibrils are mineralized with calcium hydroxyapatite.

It localises to the secreted. Its subcellular location is the extracellular space. It is found in the extracellular matrix. In terms of biological role, type I collagen is a member of group I collagen (fibrillar forming collagen). This is Collagen alpha-2(I) chain (COL1A2) from Aquarana catesbeiana (American bullfrog).